The chain runs to 257 residues: Deoxyribose-phosphate aldolase (257 aa).

Asp102 serves as the catalytic Proton donor/acceptor. Catalysis depends on Lys166, which acts as the Schiff-base intermediate with acetaldehyde. Catalysis depends on Lys198, which acts as the Proton donor/acceptor.

This sequence belongs to the DeoC/FbaB aldolase family. DeoC type 2 subfamily.

It localises to the cytoplasm. It catalyses the reaction 2-deoxy-D-ribose 5-phosphate = D-glyceraldehyde 3-phosphate + acetaldehyde. It functions in the pathway carbohydrate degradation; 2-deoxy-D-ribose 1-phosphate degradation; D-glyceraldehyde 3-phosphate and acetaldehyde from 2-deoxy-alpha-D-ribose 1-phosphate: step 2/2. Its function is as follows. Catalyzes a reversible aldol reaction between acetaldehyde and D-glyceraldehyde 3-phosphate to generate 2-deoxy-D-ribose 5-phosphate. The protein is Deoxyribose-phosphate aldolase of Aeromonas hydrophila subsp. hydrophila (strain ATCC 7966 / DSM 30187 / BCRC 13018 / CCUG 14551 / JCM 1027 / KCTC 2358 / NCIMB 9240 / NCTC 8049).